The following is a 147-amino-acid chain: 3-dehydroquinate dehydratase 1 (147 aa).

Tyrosine 23 functions as the Proton acceptor in the catalytic mechanism. Residues asparagine 75, histidine 81, and aspartate 88 each coordinate substrate. The active-site Proton donor is the histidine 101. Residues 102–103 (LS) and arginine 112 each bind substrate.

It belongs to the type-II 3-dehydroquinase family. In terms of assembly, homododecamer.

It catalyses the reaction 3-dehydroquinate = 3-dehydroshikimate + H2O. Its pathway is metabolic intermediate biosynthesis; chorismate biosynthesis; chorismate from D-erythrose 4-phosphate and phosphoenolpyruvate: step 3/7. Catalyzes a trans-dehydration via an enolate intermediate. The sequence is that of 3-dehydroquinate dehydratase 1 (aroQ1) from Pseudomonas aeruginosa (strain ATCC 15692 / DSM 22644 / CIP 104116 / JCM 14847 / LMG 12228 / 1C / PRS 101 / PAO1).